A 406-amino-acid chain; its full sequence is Succinylornithine transaminase (406 aa).

Position 252 is an N6-(pyridoxal phosphate)lysine (K252).

Belongs to the class-III pyridoxal-phosphate-dependent aminotransferase family. AstC subfamily. The cofactor is pyridoxal 5'-phosphate.

The catalysed reaction is N(2)-succinyl-L-ornithine + 2-oxoglutarate = N-succinyl-L-glutamate 5-semialdehyde + L-glutamate. It functions in the pathway amino-acid degradation; L-arginine degradation via AST pathway; L-glutamate and succinate from L-arginine: step 3/5. Its function is as follows. Catalyzes the transamination of N(2)-succinylornithine and alpha-ketoglutarate into N(2)-succinylglutamate semialdehyde and glutamate. Can also act as an acetylornithine aminotransferase. This Shigella boydii serotype 18 (strain CDC 3083-94 / BS512) protein is Succinylornithine transaminase.